A 72-amino-acid chain; its full sequence is Translation initiation factor IF-1 (72 aa).

In terms of domain architecture, S1-like spans 1 to 72 (MSKDDVIQMQ…SRARIVFRAK (72 aa)).

This sequence belongs to the IF-1 family. In terms of assembly, component of the 30S ribosomal translation pre-initiation complex which assembles on the 30S ribosome in the order IF-2 and IF-3, IF-1 and N-formylmethionyl-tRNA(fMet); mRNA recruitment can occur at any time during PIC assembly.

The protein resides in the cytoplasm. Its function is as follows. One of the essential components for the initiation of protein synthesis. Stabilizes the binding of IF-2 and IF-3 on the 30S subunit to which N-formylmethionyl-tRNA(fMet) subsequently binds. Helps modulate mRNA selection, yielding the 30S pre-initiation complex (PIC). Upon addition of the 50S ribosomal subunit IF-1, IF-2 and IF-3 are released leaving the mature 70S translation initiation complex. In Albidiferax ferrireducens (strain ATCC BAA-621 / DSM 15236 / T118) (Rhodoferax ferrireducens), this protein is Translation initiation factor IF-1.